Reading from the N-terminus, the 309-residue chain is Mannitol-1-phosphatase (309 aa).

H82 acts as the Tele-phosphohistidine intermediate in catalysis. The active-site Proton donor/acceptor is the E166.

The protein belongs to the phosphoglycerate mutase family.

The enzyme catalyses D-mannitol 1-phosphate + H2O = D-mannitol + phosphate. With respect to regulation, by diethyl pyrocarbonate (DEPC). Functionally, key enzyme for mannitol biosynthesis. This chain is Mannitol-1-phosphatase, found in Eimeria tenella (Coccidian parasite).